The sequence spans 248 residues: Putative homeobox-leucine zipper protein HOX26 (248 aa).

Residues 50-118 (KKVAAAAVVA…GDEEGASRKK (69 aa)) form a disordered region. Residues 79–89 (RQRRSCKKGRR) are compositionally biased toward basic residues. Positions 114-173 (ASRKKLRLTGEQATLLEDSFRAHNILSHAEKQELAGKLGLSARQVEVWFQNRRARTKLKQ) form a DNA-binding region, homeobox. Residues 172–216 (KQTEADCDLLRRWCDHLAADNARLRRDLAELRRSSSSPPVSGLAV) form a leucine-zipper region.

It belongs to the HD-ZIP homeobox family. Class II subfamily.

It is found in the nucleus. In terms of biological role, probable transcription factor. In Oryza sativa subsp. japonica (Rice), this protein is Putative homeobox-leucine zipper protein HOX26 (HOX26).